The following is a 157-amino-acid chain: Aspartate carbamoyltransferase regulatory chain (157 aa).

Zn(2+) is bound by residues C108, C113, C138, and C141.

Belongs to the PyrI family. As to quaternary structure, contains catalytic and regulatory chains. Zn(2+) is required as a cofactor.

Involved in allosteric regulation of aspartate carbamoyltransferase. This is Aspartate carbamoyltransferase regulatory chain from Korarchaeum cryptofilum (strain OPF8).